The primary structure comprises 70 residues: MTDKTFADRIDALEMRLTYQEETIETLNQAVTAQWKQIDALTRQVAELGERMREAEANRPGPTNEPPPHY.

The disordered stretch occupies residues 51–70; sequence RMREAEANRPGPTNEPPPHY.

The protein belongs to the SlyX family.

In Nitrobacter hamburgensis (strain DSM 10229 / NCIMB 13809 / X14), this protein is Protein SlyX homolog.